The primary structure comprises 502 residues: TNF receptor-associated factor family protein DDB_G0268444 (502 aa).

An RING-type; degenerate zinc finger spans residues 28–68 (CSICYESVYKKEIYQCKEIHWFCKTCWAESLFKKKECMICR). 2 TRAF-type zinc fingers span residues 129–183 (KHLK…SRSL) and 185–243 (NHYK…PKSN). The stretch at 261–295 (IESQSLQIKETNIKYENLLNKINKLEQLETESKCD) forms a coiled coil. In terms of domain architecture, MATH spans 368–489 (KYKNRWSISN…DDSLVIDFSI (122 aa)).

This sequence belongs to the TNF receptor-associated factor family. A subfamily.

Its subcellular location is the cytoplasm. In terms of biological role, probable adapter protein and signal transducer that links members of the tumor necrosis factor receptor family to different signaling pathways by association with the receptor cytoplasmic domain and kinases. The chain is TNF receptor-associated factor family protein DDB_G0268444 from Dictyostelium discoideum (Social amoeba).